Reading from the N-terminus, the 278-residue chain is MALTVKEKKNVEVVVPQPRQKHVIQGEPTVAYETRDLNLWYGKDHALKNINLSIYEKEVTAIIGPSGCGKSTYLKTLNRMVELVPSVRISGNISYRGRNILDKSFQVEELRTRVGMVFQKPNPFPKSIFDNVAYGPRIHGIRNKKILSEIVERSLRGAAIWDEVKDRLHENAYGLSGGQQQRLCIARCLAIEPDVILMDEPTSALDPKSTLKIEELIQELKKEYSIIIVTHNMQQAARISDKTAFFLNGEVVEYDSTDIIFSNPSDKRTEDYITGRFG.

Residues 32 to 273 (YETRDLNLWY…PSDKRTEDYI (242 aa)) form the ABC transporter domain. Position 64-71 (64-71 (GPSGCGKS)) interacts with ATP.

Belongs to the ABC transporter superfamily. Phosphate importer (TC 3.A.1.7) family. As to quaternary structure, the complex is composed of two ATP-binding proteins (PstB), two transmembrane proteins (PstC and PstA) and a solute-binding protein (PstS).

It localises to the cell membrane. The enzyme catalyses phosphate(out) + ATP + H2O = ADP + 2 phosphate(in) + H(+). Part of the ABC transporter complex PstSACB involved in phosphate import. Responsible for energy coupling to the transport system. The polypeptide is Phosphate import ATP-binding protein PstB (Halalkalibacterium halodurans (strain ATCC BAA-125 / DSM 18197 / FERM 7344 / JCM 9153 / C-125) (Bacillus halodurans)).